The primary structure comprises 359 residues: Tropomodulin-1 (359 aa).

The segment at 36-61 (ELDPDNALLPAGLRQKDQTTKAPTGP) is disordered. The interval 39–138 (PDNALLPAGL…CDIAAILGMH (100 aa)) is tropomyosin-binding.

It belongs to the tropomodulin family. As to quaternary structure, binds to the N-terminus of tropomyosin and to actin. Interacts with FLII. As to expression, highly expressed in the erythrocyte, heart and skeletal muscle.

The protein resides in the cytoplasm. The protein localises to the cytoskeleton. Functionally, blocks the elongation and depolymerization of the actin filaments at the pointed end. The Tmod/TM complex contributes to the formation of the short actin protofilament, which in turn defines the geometry of the membrane skeleton. May play an important role in regulating the organization of actin filaments by preferentially binding to a specific tropomyosin isoform at its N-terminus. This Homo sapiens (Human) protein is Tropomodulin-1 (TMOD1).